The following is a 714-amino-acid chain: Putative glutamine--fructose-6-phosphate aminotransferase [isomerizing] (714 aa).

Residue C2 is the Nucleophile; for GATase activity of the active site. The Glutamine amidotransferase type-2 domain occupies 2–321; the sequence is CGIFGYCNFL…DNDIAHIYDG (320 aa). A compositionally biased stretch (polar residues) spans 266–280; that stretch reads STTSTFNHGSSTETP. The tract at residues 266–285 is disordered; it reads STTSTFNHGSSTETPAENGL. SIS domains follow at residues 387–526 and 559–704; these read WLTE…DLVS and CDKK…VDLP.

It carries out the reaction D-fructose 6-phosphate + L-glutamine = D-glucosamine 6-phosphate + L-glutamate. It participates in nucleotide-sugar biosynthesis; UDP-N-acetyl-alpha-D-glucosamine biosynthesis; alpha-D-glucosamine 6-phosphate from D-fructose 6-phosphate: step 1/1. Functionally, involved in amino sugar synthesis (formation of chitin, supplies the amino sugars of asparagine-linked oligosaccharides of glycoproteins). The chain is Putative glutamine--fructose-6-phosphate aminotransferase [isomerizing] from Saccharomyces cerevisiae (strain YJM789) (Baker's yeast).